Here is a 377-residue protein sequence, read N- to C-terminus: tRNA/tmRNA (uracil-C(5))-methyltransferase (377 aa).

5 residues coordinate S-adenosyl-L-methionine: glutamine 199, tyrosine 227, asparagine 232, glutamate 248, and aspartate 308. The Nucleophile role is filled by cysteine 333. Glutamate 367 acts as the Proton acceptor in catalysis.

Belongs to the class I-like SAM-binding methyltransferase superfamily. RNA M5U methyltransferase family. TrmA subfamily.

It catalyses the reaction uridine(54) in tRNA + S-adenosyl-L-methionine = 5-methyluridine(54) in tRNA + S-adenosyl-L-homocysteine + H(+). The enzyme catalyses uridine(341) in tmRNA + S-adenosyl-L-methionine = 5-methyluridine(341) in tmRNA + S-adenosyl-L-homocysteine + H(+). Dual-specificity methyltransferase that catalyzes the formation of 5-methyluridine at position 54 (m5U54) in all tRNAs, and that of position 341 (m5U341) in tmRNA (transfer-mRNA). The protein is tRNA/tmRNA (uracil-C(5))-methyltransferase of Aeromonas hydrophila subsp. hydrophila (strain ATCC 7966 / DSM 30187 / BCRC 13018 / CCUG 14551 / JCM 1027 / KCTC 2358 / NCIMB 9240 / NCTC 8049).